The primary structure comprises 178 residues: MSRIGKQPVAIPSGVEVKLEGNLLKFKKGNLAKELDTKANVNVEIKEGQILFSPKGEDRQSRAYWGTYRALTQNIIIGLTDGFSKTLEINGVGYKAALKGKVLELALGFSHPINYAIPEGIEITVDKNNIIVKGSDKQVVGQVAAQIREFRPPEPYKGKGVKYSTERIIRKAGKTSKK.

It belongs to the universal ribosomal protein uL6 family. Part of the 50S ribosomal subunit.

In terms of biological role, this protein binds to the 23S rRNA, and is important in its secondary structure. It is located near the subunit interface in the base of the L7/L12 stalk, and near the tRNA binding site of the peptidyltransferase center. In Campylobacter lari (strain RM2100 / D67 / ATCC BAA-1060), this protein is Large ribosomal subunit protein uL6.